Consider the following 281-residue polypeptide: 1-acyl-sn-glycerol-3-phosphate acyltransferase (281 aa).

Transmembrane regions (helical) follow at residues 40–60, 71–91, and 110–130; these read IFVC…IMVL, LGNL…GIPI, and ASPI…VGVA. Positions 109–114 match the HXXXXD motif motif; sequence HASPID.

This sequence belongs to the 1-acyl-sn-glycerol-3-phosphate acyltransferase family.

The protein localises to the membrane. The enzyme catalyses a 1-acyl-sn-glycero-3-phosphate + an acyl-CoA = a 1,2-diacyl-sn-glycero-3-phosphate + CoA. The protein operates within phospholipid metabolism; CDP-diacylglycerol biosynthesis; CDP-diacylglycerol from sn-glycerol 3-phosphate: step 2/3. In terms of biological role, converts lysophosphatidic acid (LPA) into phosphatidic acid by incorporating acyl moiety at the 2 position. This enzyme uses erucoyl-CoA as an acyl donor. In Limnanthes alba (White meadowfoam), this protein is 1-acyl-sn-glycerol-3-phosphate acyltransferase.